A 217-amino-acid polypeptide reads, in one-letter code: Probable transaldolase (217 aa).

Lys83 acts as the Schiff-base intermediate with substrate in catalysis.

It belongs to the transaldolase family. Type 3B subfamily.

It is found in the cytoplasm. It carries out the reaction D-sedoheptulose 7-phosphate + D-glyceraldehyde 3-phosphate = D-erythrose 4-phosphate + beta-D-fructose 6-phosphate. Its pathway is carbohydrate degradation; pentose phosphate pathway; D-glyceraldehyde 3-phosphate and beta-D-fructose 6-phosphate from D-ribose 5-phosphate and D-xylulose 5-phosphate (non-oxidative stage): step 2/3. Functionally, transaldolase is important for the balance of metabolites in the pentose-phosphate pathway. This chain is Probable transaldolase, found in Bartonella tribocorum (strain CIP 105476 / IBS 506).